The following is a 448-amino-acid chain: O-Mevalon transferase yanI (448 aa).

N-linked (GlcNAc...) asparagine glycosylation is present at Asn-2. 8 helical membrane-spanning segments follow: residues 21-41, 54-74, 79-96, 165-185, 217-237, 316-336, 350-370, and 390-410; these read VLLSHSLASTHYTVLAFLLAV, YGLLLLQITCALQAFVAPPPP, AVLYTSGVLMANLLARYF, FVTAQLLTIIAMYAGLYLVEV, LIVLGLALVVYSHFALFVLPL, MLMLITFVISGLIHTSGSYHV, VKYFISQAISIMIEDFGCWLL, and IVTAGWYFWSRVHWSVMPVAL.

This sequence belongs to the wax synthase family.

The protein localises to the membrane. It functions in the pathway secondary metabolite biosynthesis; terpenoid biosynthesis. In terms of biological role, O-Mevalon transferase yanI; part of the gene cluster that mediates the biosynthesis of yanuthone D, a fungal isoprenoid epoxycyclohexenone that acts as an antibiotic against fungi and bacteria. The first step of the pathway is the synthesis of 6-methylsalicylic acid (6-MSA) by the polyketide synthase yanA. 6-MSA is then converted to m-cresol by the decarboxylase yanB. The cytochrome P450 monooxygenase yanC then catalyzes the oxidation of m-cresol to toluquinol. Epoxidation of toluquinol is then performed by the short chain dehydrogenase yanD, with the help of yanE, and a further prenylation by yanG leads to 7-deacetoxyyanuthone A. The next step is the hydroxylation of C-22 of 7-deacetoxyyanuthone A by the cytochrome P450 monooxygenase yanH to yield 22-deacetylyanuthone A. O-Mevalon transferase yanI then attaches mevalon to the hydroxyl group of 22-deacetylyanuthone A to produce yanuthone E. Finally, the FAD-dependent monooxygenase yanF oxidizes the hydroxyl group at C15 of yanuthone E to form yanuthone D. Furthermore, several branching points in the pathway lead to the production of yanuthones F and G from 7-deacetoxyyanuthone A; yanuthones H and I from 22-deacetylyanuthone A; and yanuthone J from yanuthone E. In Aspergillus niger (strain ATCC 1015 / CBS 113.46 / FGSC A1144 / LSHB Ac4 / NCTC 3858a / NRRL 328 / USDA 3528.7), this protein is O-Mevalon transferase yanI.